Reading from the N-terminus, the 24-residue chain is N-acyl-L-amino acid amidohydrolase (24 aa).

Belongs to the peptidase M20 family. As to quaternary structure, homotetramer. It depends on Co(2+) as a cofactor.

The catalysed reaction is an N-acyl-L-amino acid + H2O = an L-alpha-amino acid + a carboxylate. The enzyme catalyses an N-acetyl-L-cysteine-S-conjugate + H2O = an S-substituted L-cysteine + acetate. The sequence is that of N-acyl-L-amino acid amidohydrolase from Parageobacillus thermoglucosidasius (Geobacillus thermoglucosidasius).